The following is a 481-amino-acid chain: Aspartyl/glutamyl-tRNA(Asn/Gln) amidotransferase subunit B (481 aa).

Belongs to the GatB/GatE family. GatB subfamily. Heterotrimer of A, B and C subunits.

The catalysed reaction is L-glutamyl-tRNA(Gln) + L-glutamine + ATP + H2O = L-glutaminyl-tRNA(Gln) + L-glutamate + ADP + phosphate + H(+). It carries out the reaction L-aspartyl-tRNA(Asn) + L-glutamine + ATP + H2O = L-asparaginyl-tRNA(Asn) + L-glutamate + ADP + phosphate + 2 H(+). Allows the formation of correctly charged Asn-tRNA(Asn) or Gln-tRNA(Gln) through the transamidation of misacylated Asp-tRNA(Asn) or Glu-tRNA(Gln) in organisms which lack either or both of asparaginyl-tRNA or glutaminyl-tRNA synthetases. The reaction takes place in the presence of glutamine and ATP through an activated phospho-Asp-tRNA(Asn) or phospho-Glu-tRNA(Gln). This chain is Aspartyl/glutamyl-tRNA(Asn/Gln) amidotransferase subunit B, found in Pseudomonas fluorescens (strain SBW25).